We begin with the raw amino-acid sequence, 416 residues long: Diaminobutyrate--2-oxoglutarate transaminase (416 aa).

Lys263 is modified (N6-(pyridoxal phosphate)lysine).

Belongs to the class-III pyridoxal-phosphate-dependent aminotransferase family. Pyridoxal 5'-phosphate serves as cofactor.

It carries out the reaction L-2,4-diaminobutanoate + 2-oxoglutarate = L-aspartate 4-semialdehyde + L-glutamate. It participates in amine and polyamine biosynthesis; ectoine biosynthesis; L-ectoine from L-aspartate 4-semialdehyde: step 1/3. Catalyzes reversively the conversion of L-aspartate beta-semialdehyde (ASA) to L-2,4-diaminobutyrate (DABA) by transamination with L-glutamate. This chain is Diaminobutyrate--2-oxoglutarate transaminase (ectB), found in Virgibacillus pantothenticus.